Reading from the N-terminus, the 251-residue chain is L,D-transpeptidase 1 (251 aa).

An N-terminal signal peptide occupies residues 1–28; that stretch reads MRRVVRYLSVVVAITLMLTAESVSIATA. A L,D-TPase catalytic domain is found at 125–250; that stretch reads LIGVASISAH…VTVGDPIEVV (126 aa). Substrate is bound by residues tyrosine 190 and 203–204; that span reads SG. The Proton donor/acceptor role is filled by histidine 208. The Nucleophile role is filled by cysteine 226. Position 228 (asparagine 228) interacts with substrate.

As to quaternary structure, monomer.

It is found in the periplasm. It participates in cell wall biogenesis; peptidoglycan biosynthesis. Its activity is regulated as follows. Is irreversibly inactivated by the beta-lactams carbapenems via the formation of a covalent adduct resulting from acylation of the catalytic Cys. In terms of biological role, generates 3-&gt;3 cross-links in peptidoglycan, catalyzing the cleavage of the mDap(3)-D-Ala(4) bond of a tetrapeptide donor stem and the formation of a bond between the carbonyl of mDap(3) of the donor stem and the side chain of mDap(3) of the acceptor stem. Is specific for donor substrates containing a stem tetrapeptide since it cannot use pentapeptide stems. The protein is L,D-transpeptidase 1 (ldtA) of Mycobacterium tuberculosis (strain CDC 1551 / Oshkosh).